The chain runs to 538 residues: MKRRLFPLTFSAKMMGFIALLIIAMFVLLGVFLNEQYARTLEEQMGERALSVAQAVALIPELREAFSAERPDEIIQPIAESIRVETGAEFIVVGNTDLIRYAHPLPERIGQRMVGGDNERALVHGESYVSKAVGSLGPSIRGKVPVFDDNGKIIGIVSVGFLMEDIQQVIGERLIAMWQIVVVIMILGLMGTWLVANTVKKATLGLEPEEIGQQFQQKEAILQSIHEGVIAVNKEGKVTLFNQAAMKYVDPELDKEDVLGRHVTDLVKHTRLPEVLQVGKGQYDQELRIGDKQAVVNRVPIYYDHEIVGAVATFRDRNEIKKLSEELTNVKNYADALRAQTHEFSNKLNTISGFLQLGKIDEAVDFIQKERKIQQEWIHFFIERVNDPTVSAVLLGKISQAQELGIDVDIDPSSQLLTPLQERQQELLVTMIGNLLENAFDALLASGIENKKIYISFTDMGDDFIFEVEDNGPGIPPQLMESIFEEGFSTKEGTHRGFGLALVKKAVHELGGAIFLEEGELGGACFVLTIPKHEAKEG.

The Cytoplasmic portion of the chain corresponds to 1–13; the sequence is MKRRLFPLTFSAK. The chain crosses the membrane as a helical span at residues 14-34; the sequence is MMGFIALLIIAMFVLLGVFLN. Residues 35 to 174 lie on the Extracellular side of the membrane; the sequence is EQYARTLEEQ…DIQQVIGERL (140 aa). The chain crosses the membrane as a helical span at residues 175–195; the sequence is IAMWQIVVVIMILGLMGTWLV. Residues 196 to 538 lie on the Cytoplasmic side of the membrane; that stretch reads ANTVKKATLG…TIPKHEAKEG (343 aa). The region spanning 216 to 282 is the PAS domain; it reads QQKEAILQSI…PEVLQVGKGQ (67 aa). The Histidine kinase domain maps to 339-534; that stretch reads AQTHEFSNKL…CFVLTIPKHE (196 aa). At His-342 the chain carries Phosphohistidine; by autocatalysis.

The protein resides in the cell membrane. The enzyme catalyses ATP + protein L-histidine = ADP + protein N-phospho-L-histidine.. Member of the two-component regulatory system CitT/CitS. Functions probably as a membrane-associated protein kinase that phosphorylates CitT in response to environmental citrate or Mg(2+)-citrate complex. This chain is Sensor protein CitS (citS), found in Halalkalibacterium halodurans (strain ATCC BAA-125 / DSM 18197 / FERM 7344 / JCM 9153 / C-125) (Bacillus halodurans).